A 190-amino-acid polypeptide reads, in one-letter code: dCTP deaminase (190 aa).

107 to 112 (KSTYAR) provides a ligand contact to dCTP. E133 functions as the Proton donor/acceptor in the catalytic mechanism. DCTP-binding residues include Q152, Y166, and Q176.

Belongs to the dCTP deaminase family. As to quaternary structure, homotrimer.

It catalyses the reaction dCTP + H2O + H(+) = dUTP + NH4(+). The protein operates within pyrimidine metabolism; dUMP biosynthesis; dUMP from dCTP (dUTP route): step 1/2. In terms of biological role, catalyzes the deamination of dCTP to dUTP. This Campylobacter hominis (strain ATCC BAA-381 / DSM 21671 / CCUG 45161 / LMG 19568 / NCTC 13146 / CH001A) protein is dCTP deaminase.